Here is a 573-residue protein sequence, read N- to C-terminus: NEDD4-binding protein 3-B (573 aa).

Disordered regions lie at residues 119 to 138, 173 to 220, and 384 to 405; these read EFSK…RFGP, CVGS…NSYS, and GENE…NLED. Basic and acidic residues predominate over residues 125 to 135; the sequence is LPERGHSDKSR. The segment covering 186–196 has biased composition (low complexity); sequence SNSHSNNPSES. Composition is skewed to polar residues over residues 207 to 220 and 392 to 401; these read DSKQ…NSYS and KQSQSDNSGP. Residues 287–474 are a coiled coil; sequence ESVEDVARQL…CLQALEDVKS (188 aa).

This sequence belongs to the N4BP3 family.

The protein resides in the cytoplasmic vesicle. It is found in the cell projection. The protein localises to the axon. Its subcellular location is the dendrite. In terms of biological role, plays a role in axon and dendrite arborization during cranial nerve development. Also important for neural crest migration and early development of other anterior structures including eye, brain and cranial cartilage. This chain is NEDD4-binding protein 3-B, found in Xenopus laevis (African clawed frog).